The following is a 147-amino-acid chain: Large ribosomal subunit protein uL15 (147 aa).

Residues 1-46 form a disordered region; the sequence is MSIRLENLSYTPGARKEKHRKGRGHAAGKGKQAGRGQSGQKKRSTV. The span at 16–28 shows a compositional bias: basic residues; it reads KEKHRKGRGHAAG.

The protein belongs to the universal ribosomal protein uL15 family. As to quaternary structure, part of the 50S ribosomal subunit.

In terms of biological role, binds to the 23S rRNA. The polypeptide is Large ribosomal subunit protein uL15 (Mesomycoplasma hyopneumoniae (strain J / ATCC 25934 / NCTC 10110) (Mycoplasma hyopneumoniae)).